The sequence spans 364 residues: Aminomethyltransferase (364 aa).

This sequence belongs to the GcvT family. In terms of assembly, the glycine cleavage system is composed of four proteins: P, T, L and H.

It carries out the reaction N(6)-[(R)-S(8)-aminomethyldihydrolipoyl]-L-lysyl-[protein] + (6S)-5,6,7,8-tetrahydrofolate = N(6)-[(R)-dihydrolipoyl]-L-lysyl-[protein] + (6R)-5,10-methylene-5,6,7,8-tetrahydrofolate + NH4(+). Functionally, the glycine cleavage system catalyzes the degradation of glycine. The polypeptide is Aminomethyltransferase (Shewanella woodyi (strain ATCC 51908 / MS32)).